The sequence spans 144 residues: Large ribosomal subunit protein uL13 (144 aa).

The segment at 125–144 (YRGPEHPHQAQKPQPLEVKA) is disordered.

This sequence belongs to the universal ribosomal protein uL13 family. Part of the 50S ribosomal subunit.

Its function is as follows. This protein is one of the early assembly proteins of the 50S ribosomal subunit, although it is not seen to bind rRNA by itself. It is important during the early stages of 50S assembly. This is Large ribosomal subunit protein uL13 from Aquifex aeolicus (strain VF5).